The chain runs to 188 residues: Elongation factor P (188 aa).

It belongs to the elongation factor P family.

It is found in the cytoplasm. It functions in the pathway protein biosynthesis; polypeptide chain elongation. Functionally, involved in peptide bond synthesis. Stimulates efficient translation and peptide-bond synthesis on native or reconstituted 70S ribosomes in vitro. Probably functions indirectly by altering the affinity of the ribosome for aminoacyl-tRNA, thus increasing their reactivity as acceptors for peptidyl transferase. This Rhodopseudomonas palustris (strain HaA2) protein is Elongation factor P.